A 257-amino-acid chain; its full sequence is Protein orai-2 (257 aa).

A run of 4 helical transmembrane segments spans residues 67–84 (TSAL…EVQL), 95–115 (LIAF…ALLI), 149–169 (LAWG…VVLL), and 199–219 (AALV…VFTI).

This sequence belongs to the Orai family.

Its subcellular location is the membrane. Its function is as follows. Ca(2+) release-activated Ca(2+)-like (CRAC-like) channel subunit which mediates Ca(2+) influx and increase in Ca(2+)-selective current by synergy with the Ca(2+) sensor, STIM1. The chain is Protein orai-2 (ORAI2) from Gallus gallus (Chicken).